A 325-amino-acid chain; its full sequence is MSEQVDLRHDWTLAEIEALLQSPLMDLLWKAQAVHRSANPGYKVQLASLLSVKTGGCEEDCAYCPQSMHHSSDVTGQPDLEVKAVLDRARVAAEAGADRFCMGWAWREIREGPAFESMLSMVRGVRELGLEACVTAGMLTDSQAERLAEAGLTAYNHNLDTSPEHYDSIITTRTYQERLETLQRVRQAGVTLCCGGIIGMGESVRDRASMLQVLACLDPHPESVPINALVAVEGTPLEAQPSIDPLELVRMVAVARILMPQSRVRLSAGREQLNREAQILCLQAGADSIFYGDSLLTTSNPAVESDRALLAAAGVQASWHESAAA.

Residues 42–270 (YKVQLASLLS…QSRVRLSAGR (229 aa)) form the Radical SAM core domain. C57, C61, and C64 together coordinate [4Fe-4S] cluster. 4 residues coordinate [2Fe-2S] cluster: C101, C133, C193, and R265.

This sequence belongs to the radical SAM superfamily. Biotin synthase family. As to quaternary structure, homodimer. It depends on [4Fe-4S] cluster as a cofactor. [2Fe-2S] cluster is required as a cofactor.

The enzyme catalyses (4R,5S)-dethiobiotin + (sulfur carrier)-SH + 2 reduced [2Fe-2S]-[ferredoxin] + 2 S-adenosyl-L-methionine = (sulfur carrier)-H + biotin + 2 5'-deoxyadenosine + 2 L-methionine + 2 oxidized [2Fe-2S]-[ferredoxin]. The protein operates within cofactor biosynthesis; biotin biosynthesis; biotin from 7,8-diaminononanoate: step 2/2. In terms of biological role, catalyzes the conversion of dethiobiotin (DTB) to biotin by the insertion of a sulfur atom into dethiobiotin via a radical-based mechanism. The polypeptide is Biotin synthase (Synechococcus sp. (strain WH7803)).